A 201-amino-acid polypeptide reads, in one-letter code: MBF complex negative regulatory component yox1 (201 aa).

A compositionally biased stretch (polar residues) spans 1–22; the sequence is MSLSDSPSKSGNTGKDLISNNE. The interval 1-42 is disordered; that stretch reads MSLSDSPSKSGNTGKDLISNNEAKNHEDEETHQKKRRRRTTD. Over residues 23–32 the composition is skewed to basic and acidic residues; sequence AKNHEDEETH. The homeobox DNA-binding region spans 33–92; that stretch reads QKKRRRRTTDAEATLLEQYFLKTPKPSLIERQELSKKLKSSMTPRELQIWFQNKRQSLRR.

Component of the MBF transcription factor complex. In terms of processing, phosphorylated in response to hydroxyurea. Phosphorylation inhibits the repressor activity and is dependent on rad3. However, the regulation of yox1 by rad3 is probably indirect.

The protein resides in the nucleus. Functionally, negative regulatory component of the MBF transcription factor complex involved in cell-cycle G1/S phase-specific gene expression and more particularly DNA replication checkpoint-dependent gene expression. This chain is MBF complex negative regulatory component yox1 (yox1), found in Schizosaccharomyces pombe (strain 972 / ATCC 24843) (Fission yeast).